A 158-amino-acid chain; its full sequence is Large ribosomal subunit protein uL11 (158 aa).

Belongs to the universal ribosomal protein uL11 family. In terms of assembly, part of the ribosomal stalk of the 50S ribosomal subunit. Interacts with L10 and the large rRNA to form the base of the stalk. L10 forms an elongated spine to which L12 dimers bind in a sequential fashion forming a multimeric L10(L12)X complex.

Its function is as follows. Forms part of the ribosomal stalk which helps the ribosome interact with GTP-bound translation factors. The polypeptide is Large ribosomal subunit protein uL11 (Methanospirillum hungatei JF-1 (strain ATCC 27890 / DSM 864 / NBRC 100397 / JF-1)).